The sequence spans 283 residues: Orotidine 5'-phosphate decarboxylase (283 aa).

Catalysis depends on lysine 97, which acts as the Proton donor.

It belongs to the OMP decarboxylase family. Type 2 subfamily.

The catalysed reaction is orotidine 5'-phosphate + H(+) = UMP + CO2. Its pathway is pyrimidine metabolism; UMP biosynthesis via de novo pathway; UMP from orotate: step 2/2. This chain is Orotidine 5'-phosphate decarboxylase, found in Clostridium botulinum (strain Kyoto / Type A2).